The chain runs to 1212 residues: Peregrin (1212 aa).

The C2H2-type zinc finger occupies 21 to 47; it reads YECPVETCRKVYKSYSGIEYHLYHYDH. Disordered regions lie at residues 43-87 and 118-176; these read YHYD…SPGR and VVSE…PKLP. Residues 58–67 show a composition bias toward basic residues; it reads LRKHKKKGRQ. Positions 59 to 221 are interaction with KAT6A and KAT6B; the sequence is RKHKKKGRQS…VEYDMDEEDY (163 aa). Positions 74–85 are enriched in low complexity; sequence QSPSPSEVSQSP. Residues 119–130 are compositionally biased toward acidic residues; the sequence is VSEDEEAPEEAP. A Phosphoserine modification is found at S120. K147 is modified (N6-acetyllysine). Over residues 148–166 the composition is skewed to basic residues; the sequence is SGKHKNKEKRKDSNHHHHS. S237 carries the post-translational modification Phosphoserine. The PHD-type 1 zinc finger occupies 272–322; that stretch reads DAVCCICNDGECQNSNVILFCDMCNLAVHQECYGVPYIPEGQWLCRRCLQS. Residues 326–359 form a C2HC pre-PHD-type zinc finger; it reads AVDCALCPNKGGAFKQTDDGRWAHVVCALWIPEV. A PHD-type 2 zinc finger spans residues 383-447; that stretch reads LTCYICKQRG…RKTAYCDIHT (65 aa). A disordered region spans residues 447 to 489; it reads TPPGSARRLPALSHSEGEEEEDEEEDEGKSWSSEKVKKAKAKS. Residues S459 and S461 each carry the phosphoserine modification. The segment covering 463–473 has biased composition (acidic residues); the sequence is GEEEEDEEEDE. Residues 500–819 are interaction with MEAF6 and ING5; sequence LAEKRAAAPV…IKKEMTALRR (320 aa). Positions 542-1077 are required for RUNX1 and RUNX2 transcriptional activation; it reads YWTLKRQSRN…RGAGWLSEDE (536 aa). An N6-acetyllysine modification is found at K579. A Bromo domain is found at 627–731; sequence MQLTPFLILL…EQGGAVLRQA (105 aa). Residues 817 to 1060 are disordered; the sequence is LRRKLAHQRE…VGTGRGVGHS (244 aa). The segment covering 823–836 has biased composition (basic and acidic residues); it reads HQRETGRDGPERHG. T856 is subject to Phosphothreonine. A compositionally biased stretch (low complexity) spans 856–869; sequence TDSAAEESSSQETS. Phosphoserine is present on residues S858, S915, S920, and S924. Over residues 993–1019 the composition is skewed to low complexity; the sequence is PRSSSDSESSSSSSSSAASDRTSTTPS. Phosphoserine is present on S1074. A PWWP domain is found at 1083 to 1166; the sequence is ALDLVWAKCR…RTKLVPLGVN (84 aa). S1185 carries the post-translational modification Phosphoserine.

As to quaternary structure, component of some HBO1 complex composed of KAT7/HBO1, MEAF6, ING5, and BRPF1. Component of the MOZ/MORF complex composed at least of ING5, KAT6A, KAT6B, MEAF6 and one of BRPF1, BRD1/BRPF2 and BRPF3. Interacts (via PHD-type zinc finger domains) with unmethylated histone H3 at 'Lys-4' (H3K4me0). Interacts with trimethylated 'Lys-36' of histone H3 (H3K36me3). Interacts with ING5; interaction directs BRPF1 to H4K4me3-enriched chromatin at the 5' of active genes. Interacts with KAT7. In terms of processing, acetylated by KAT6A. Expressed at low level in most tissues, with high expression in the testis and specific regions of the brain.

The protein resides in the nucleus. It localises to the chromosome. The protein localises to the cytoplasm. Functionally, scaffold subunit of various histone acetyltransferase (HAT) complexes, such as the MOZ/MORF and HBO1 complexes, which have a histone H3 acetyltransferase activity. Plays a key role in HBO1 complex by directing KAT7/HBO1 specificity towards histone H3 'Lys-14' acetylation (H3K14ac). Some HAT complexes preferentially mediate histone H3 'Lys-23' (H3K23ac) acetylation. Positively regulates the transcription of RUNX1 and RUNX2. The polypeptide is Peregrin (Mus musculus (Mouse)).